A 97-amino-acid chain; its full sequence is Large ribosomal subunit protein uL23 (97 aa).

It belongs to the universal ribosomal protein uL23 family. As to quaternary structure, part of the 50S ribosomal subunit. Contacts protein L29, and trigger factor when it is bound to the ribosome.

Functionally, one of the early assembly proteins it binds 23S rRNA. One of the proteins that surrounds the polypeptide exit tunnel on the outside of the ribosome. Forms the main docking site for trigger factor binding to the ribosome. The sequence is that of Large ribosomal subunit protein uL23 from Anaeromyxobacter sp. (strain Fw109-5).